The primary structure comprises 440 residues: MESQQLSNYPHISHGSACASVTSKEVHTNQDPLDVSASKIQEYDKASTKANSQQTTTPASSAVPENPHHASPQPASVPPPQNGPYPQQCMMTQNQANPSGWSFYGHPSMIPYTPYQMSPMYFPPGPQSQFPQYPSSVGTPLSTPSPESGNTFTDSSSADSDMTSTKKYVRPPPMLTSPNDFPNWVKTYIKFLQNSNLGGIIPTVNGKPVRQITDDELTFLYNTFQIFAPSQFLPTWVKDILSVDYTDIMKILSKSIEKMQSDTQEANDIVTLANLQYNGSTPADAFETKVTNIIDRLNNNGIHINNKVACQLIMRGLSGEYKFLRYTRHRHLNMTVAELFLDIHAIYEEQQGSRNSKPNYRRNPSDEKNDSRSYTNTTKPKVIARNPQKTNNSKSKTARAHNVSTSNNSPSTDNDSISKSTTEPIQLNNKHDLHLRPGTY.

Composition is skewed to polar residues over residues 1–10, 48–60, and 127–152; these read MESQQLSNYP, TKANSQQTTTPAS, and QSQFPQYPSSVGTPLSTPSPESGNTF. Disordered stretches follow at residues 1–93, 126–173, and 352–440; these read MESQ…MMTQ, PQSQ…RPPP, and GSRN…PGTY. Over residues 153 to 165 the composition is skewed to low complexity; it reads TDSSSADSDMTST. The tract at residues 299–401 is RNA-binding; sequence NNGIHINNKV…NSKSKTARAH (103 aa). A compositionally biased stretch (low complexity) spans 402–418; sequence NVSTSNNSPSTDNDSIS. S416 carries the phosphoserine modification. Over residues 419 to 428 the composition is skewed to polar residues; the sequence is KSTTEPIQLN. A compositionally biased stretch (basic and acidic residues) spans 429-440; that stretch reads NKHDLHLRPGTY.

In terms of assembly, homotrimer.

Its subcellular location is the cytoplasm. Its function is as follows. Capsid protein (CA) is the structural component of the virus-like particle (VLP), forming the shell that encapsulates the retrotransposons dimeric RNA genome. The particles are assembled from trimer-clustered units and there are holes in the capsid shells that allow for the diffusion of macromolecules. CA also has nucleocapsid-like chaperone activity, promoting primer tRNA(i)-Met annealing to the multipartite primer-binding site (PBS), dimerization of Ty1 RNA and initiation of reverse transcription. This chain is Transposon Ty1-DR1 Gag polyprotein (TY1A-DR1), found in Saccharomyces cerevisiae (strain ATCC 204508 / S288c) (Baker's yeast).